A 554-amino-acid chain; its full sequence is Phenylalanine--tRNA ligase beta subunit (554 aa).

In terms of domain architecture, B5 spans 274–351 (LTPDSAEITI…INYGYENFNG (78 aa)). Residues D329, D335, and D339 each contribute to the Mg(2+) site.

The protein belongs to the phenylalanyl-tRNA synthetase beta subunit family. Type 2 subfamily. As to quaternary structure, tetramer of two alpha and two beta subunits. Mg(2+) is required as a cofactor.

It is found in the cytoplasm. It catalyses the reaction tRNA(Phe) + L-phenylalanine + ATP = L-phenylalanyl-tRNA(Phe) + AMP + diphosphate + H(+). This Methanococcus aeolicus (strain ATCC BAA-1280 / DSM 17508 / OCM 812 / Nankai-3) protein is Phenylalanine--tRNA ligase beta subunit.